We begin with the raw amino-acid sequence, 137 residues long: 15 kDa protein A (137 aa).

The first 20 residues, 1 to 20 (MAGVWKVLVVLVGLAVVACA), serve as a signal peptide directing secretion. 2 cysteine pairs are disulfide-bonded: Cys-77/Cys-88 and Cys-99/Cys-116.

This sequence belongs to the cathelicidin family. As to expression, large granules of neutrophils.

Its subcellular location is the secreted. Functionally, binds to bacterial lipopolysaccharides (LPS), potentiates strongly the early antibacterial effects of BPI. Inhibits the late lethal action of BPI. The sequence is that of 15 kDa protein A from Oryctolagus cuniculus (Rabbit).